A 768-amino-acid chain; its full sequence is Cullin-3-A (768 aa).

The tract at residues 677-698 (VAAKQGESDPERKETRQKVDDD) is disordered. The span at 682–698 (GESDPERKETRQKVDDD) shows a compositional bias: basic and acidic residues. One can recognise a Cullin neddylation domain in the interval 698–760 (DRKHEIEAAI…REYLARTPED (63 aa)). A Glycyl lysine isopeptide (Lys-Gly) (interchain with G-Cter in NEDD8) cross-link involves residue Lys712.

It belongs to the cullin family. Component of multiple BCR (BTB-CUL3-RBX1) E3 ubiquitin-protein ligase complexes formed of cul3, rbx1 and a variable BTB domain-containing protein acting as both, adapter to cullin and substrate recognition subunit. Interacts with btbd6. Neddylated. Attachment of NEDD8 is required for the E3 ubiquitin-protein ligase activity of the SCF-like complex.

The protein resides in the nucleus. Its pathway is protein modification; protein ubiquitination. Functionally, probable core component of cullin-based SCF-like E3 ubiquitin-protein ligase complexes which mediate the ubiquitination and subsequent proteasomal degradation of target proteins. The E3 ubiquitin-protein ligase activity of the complex is dependent on the neddylation of the cullin subunit. Involved in ER-Golgi transport by regulating the size of COPII coats, thereby playing a key role in collagen export, which is required for embryonic stem (ES) cells division. May play a role in the regulation of mittotic entry via ubiquitination of aurka. The protein is Cullin-3-A (cul3a) of Xenopus laevis (African clawed frog).